Here is a 203-residue protein sequence, read N- to C-terminus: Recombination protein RecR (203 aa).

The C4-type zinc-finger motif lies at 56 to 71; that stretch reads CTVCGNVSDDERCRIC. The Toprim domain occupies 79–179; that stretch reads SVVCVVEEPK…TVTRIASGLP (101 aa).

It belongs to the RecR family.

May play a role in DNA repair. It seems to be involved in an RecBC-independent recombinational process of DNA repair. It may act with RecF and RecO. The polypeptide is Recombination protein RecR (Mycobacterium leprae (strain TN)).